The following is a 591-amino-acid chain: Trihelix transcription factor PTL (591 aa).

The disordered stretch occupies residues 1–32; sequence MDQDQHPQYGIPELRQLMKGGGRTTTTTPSTS. The 60-residue stretch at 118–177 folds into the Myb-like 1 domain; it reads GRWPRQETLTLLEIRSRLDHKFKEANQKGPLWDEVSRIMSEEHGYQRSGKKCREKFENLY. The interval 380-410 is disordered; it reads CSSPEERTNGNNEIRNNSETQNENGSDQTMT. Polar residues predominate over residues 388–410; that stretch reads NGNNEIRNNSETQNENGSDQTMT. The 58-residue stretch at 422-479 folds into the Myb-like 2 domain; sequence WGEQEILKLMEIRTSMDSTFQEILGGCSDEFLWEEIAAKLIQLGFDQRSALLCKEKWE. Residues 491–551 form a disordered region; the sequence is QINKKRKDNS…SNANANANVT (61 aa). Residues 515 to 534 show a composition bias toward polar residues; that stretch reads IYNNRESGYNDNDPHQINEQ. Positions 535 to 551 are enriched in low complexity; the sequence is GNVGSSTSNANANANVT.

As to quaternary structure, interacts with KIN10. Confined to flowers, at low levels. Also present in 7-days-old seedlings. Barely detectable in other tissues such as young seedlings, roots, stems, leaves and siliques. Expressed in flower primordia, more precisely between newly arisen sepal primordia and also at the basal margins of developing sepals.

Its subcellular location is the nucleus. Its function is as follows. Transcription factor that prevents growth. Regulates perianth architecture in flower, mostly in the second whorl, probably by suppressing growth between initiating sepals, ensuring that they remain separate, and by modulating organ shapes. Required for the establishment of auxin flux. The chain is Trihelix transcription factor PTL (PTL) from Arabidopsis thaliana (Mouse-ear cress).